Here is a 1074-residue protein sequence, read N- to C-terminus: DNA double-strand break repair Rad50 ATPase (1074 aa).

ATP contacts are provided by residues arginine 12, 32–38 (NGSGKSS), and glutamine 142. Coiled-coil stretches lie at residues 355–402 (ELEK…REKA) and 452–506 (NLVE…KGLG). The Zinc-hook domain occupies 512–611 (LENLEDFSEL…KITRLKDAKK (100 aa)). Residues cysteine 559 and cysteine 562 each contribute to the Zn(2+) site. 4 coiled-coil regions span residues 574 to 611 (TAEECEDKKEKLASELADIKVQHAELEKKITRLKDAKK), 649 to 678 (LKLESLDKRKQELETSGRQLLSDIKTLQVQ), 749 to 823 (KEKL…EILE), and 865 to 895 (TEEKDSLLKEIGMLENSLKRLRELRKELKAL). 973-978 (LLSGGE) is a binding site for ATP.

It belongs to the SMC family. RAD50 subfamily. Homodimer. Forms a heterotetramer composed of two Mre11 subunits and two Rad50 subunits. Requires Zn(2+) as cofactor.

In terms of biological role, part of the Rad50/Mre11 complex, which is involved in the early steps of DNA double-strand break (DSB) repair. The complex may facilitate opening of the processed DNA ends to aid in the recruitment of HerA and NurA. Rad50 controls the balance between DNA end bridging and DNA resection via ATP-dependent structural rearrangements of the Rad50/Mre11 complex. This is DNA double-strand break repair Rad50 ATPase from Methanosarcina acetivorans (strain ATCC 35395 / DSM 2834 / JCM 12185 / C2A).